Here is a 112-residue protein sequence, read N- to C-terminus: UPF0342 protein SP_1372 (112 aa).

It belongs to the UPF0342 family.

The chain is UPF0342 protein SP_1372 from Streptococcus pneumoniae serotype 4 (strain ATCC BAA-334 / TIGR4).